A 126-amino-acid polypeptide reads, in one-letter code: Hydrogenase maturation factor HypA (126 aa).

A Ni(2+)-binding site is contributed by His-2. Residues Cys-78, Cys-81, Cys-97, and Cys-100 each contribute to the Zn(2+) site.

The protein belongs to the HypA/HybF family.

Involved in the maturation of [NiFe] hydrogenases. Required for nickel insertion into the metal center of the hydrogenase. The protein is Hydrogenase maturation factor HypA of Methanococcus maripaludis (strain C6 / ATCC BAA-1332).